The chain runs to 119 residues: Large ribosomal subunit protein bL20 (119 aa).

The protein belongs to the bacterial ribosomal protein bL20 family.

Binds directly to 23S ribosomal RNA and is necessary for the in vitro assembly process of the 50S ribosomal subunit. It is not involved in the protein synthesizing functions of that subunit. This is Large ribosomal subunit protein bL20 from Clostridium botulinum (strain Alaska E43 / Type E3).